Consider the following 456-residue polypeptide: Outer membrane protein assembly factor BamB (456 aa).

A signal peptide spans 1–19; sequence MKKLLFITAPLLLSVLTAS. Residue cysteine 20 is the site of N-palmitoyl cysteine attachment. Cysteine 20 is lipidated: S-diacylglycerol cysteine.

The protein belongs to the BamB family. Part of the Bam complex.

It is found in the cell outer membrane. Its function is as follows. Part of the outer membrane protein assembly complex, which is involved in assembly and insertion of beta-barrel proteins into the outer membrane. In Francisella tularensis subsp. tularensis (strain SCHU S4 / Schu 4), this protein is Outer membrane protein assembly factor BamB.